The following is a 304-amino-acid chain: MKCTKCGKPASVKLRHYNIKLCKEHFNEFIEQRVEKAIKKFKMFGRNSKILIAVSGGKDSVSLWHMLKKLGYEVDALFIRAGKSGMVQKAQEIVEKNAELLNTKLHIVDATEYFGGLSTQEISIMLRRPVCSICGVVRRYLMNKFAYENGYDVVVTGHNLNDEASVLLGNILHWQEGYLERQWPLLPKTHEKLVPKAKPLVLNYEEDIKLYATLNEIPHLEMACPFSVGATSLVYKKILRELEEEQPGITLNFYLGFLKRKKEPKFEVEGLRECKECGYPTTAEVCSFCRLRKQVEKRKNKTPA.

Cys3, Cys6, Cys22, and His25 together coordinate Zn(2+). Residues Ala53 and Ile79 each contribute to the ATP site. [4Fe-4S] cluster contacts are provided by Cys131 and Cys134. Residues Arg138 and Gly157 each coordinate ATP. Cys224 lines the [4Fe-4S] cluster pocket. Zn(2+) contacts are provided by Cys274, Cys277, Cys286, and Cys289.

Belongs to the TtcA family. TtuA subfamily. In terms of assembly, homodimer. It depends on [4Fe-4S] cluster as a cofactor. Mg(2+) is required as a cofactor.

The catalysed reaction is 5-methyluridine(54) in tRNA + hydrogen sulfide + ATP = 5-methyl-2-thiouridine(54) in tRNA + AMP + diphosphate. The protein operates within tRNA modification. Functionally, catalyzes the ATP-dependent 2-thiolation of 5-methyluridine residue at position 54 in the T loop of tRNAs, leading to 5-methyl-2-thiouridine (m(5)s(2)U or s(2)T). This modification allows thermal stabilization of tRNAs in thermophilic microorganisms, and is required for cell growth at high temperatures. Can use free sulfide as sulfur source in vitro. The polypeptide is tRNA-5-methyluridine(54) 2-sulfurtransferase (Thermotoga maritima (strain ATCC 43589 / DSM 3109 / JCM 10099 / NBRC 100826 / MSB8)).